The sequence spans 530 residues: Phosphoenolpyruvate carboxykinase (ATP) (530 aa).

Substrate-binding residues include R60, Y195, and K201. ATP contacts are provided by residues K201, H221, and 237 to 245 (GLSGTGKTT). Mn(2+) contacts are provided by K201 and H221. D258 lines the Mn(2+) pocket. 3 residues coordinate ATP: E286, R324, and S449. R324 lines the substrate pocket.

The protein belongs to the phosphoenolpyruvate carboxykinase (ATP) family. Mn(2+) serves as cofactor.

Its subcellular location is the cytoplasm. The enzyme catalyses oxaloacetate + ATP = phosphoenolpyruvate + ADP + CO2. The protein operates within carbohydrate biosynthesis; gluconeogenesis. Functionally, involved in the gluconeogenesis. Catalyzes the conversion of oxaloacetate (OAA) to phosphoenolpyruvate (PEP) through direct phosphoryl transfer between the nucleoside triphosphate and OAA. The polypeptide is Phosphoenolpyruvate carboxykinase (ATP) (Geobacter metallireducens (strain ATCC 53774 / DSM 7210 / GS-15)).